The sequence spans 305 residues: UDP-3-O-acyl-N-acetylglucosamine deacetylase (305 aa).

Zn(2+)-binding residues include His79, His238, and Asp242. The active-site Proton donor is the His265.

Belongs to the LpxC family. It depends on Zn(2+) as a cofactor.

The catalysed reaction is a UDP-3-O-[(3R)-3-hydroxyacyl]-N-acetyl-alpha-D-glucosamine + H2O = a UDP-3-O-[(3R)-3-hydroxyacyl]-alpha-D-glucosamine + acetate. It participates in glycolipid biosynthesis; lipid IV(A) biosynthesis; lipid IV(A) from (3R)-3-hydroxytetradecanoyl-[acyl-carrier-protein] and UDP-N-acetyl-alpha-D-glucosamine: step 2/6. In terms of biological role, catalyzes the hydrolysis of UDP-3-O-myristoyl-N-acetylglucosamine to form UDP-3-O-myristoylglucosamine and acetate, the committed step in lipid A biosynthesis. The polypeptide is UDP-3-O-acyl-N-acetylglucosamine deacetylase (Pasteurella multocida (strain Pm70)).